We begin with the raw amino-acid sequence, 341 residues long: Probable long-chain-alcohol O-fatty-acyltransferase 1 (341 aa).

8 helical membrane-spanning segments follow: residues N7–S27, L36–V56, F58–A78, P120–Y140, F149–F169, M233–F253, T261–V281, and A293–A313.

The protein belongs to the wax synthase family.

Its subcellular location is the membrane. The enzyme catalyses a long chain fatty alcohol + a fatty acyl-CoA = a wax ester + CoA. Its function is as follows. Catalyzes the final step in the synthesis of long-chain linear esters (waxes). The chain is Probable long-chain-alcohol O-fatty-acyltransferase 1 (AT1) from Arabidopsis thaliana (Mouse-ear cress).